Here is a 443-residue protein sequence, read N- to C-terminus: Ribosomal protein uS12 methylthiotransferase RimO (443 aa).

Positions 8 to 118 (PKIGFVSLGC…VLSHIHHYVP (111 aa)) constitute an MTTase N-terminal domain. Residues Cys17, Cys53, Cys82, Cys150, Cys154, and Cys157 each coordinate [4Fe-4S] cluster. The Radical SAM core domain occupies 136 to 373 (LTPRHYAYLK…MQLQQQISTE (238 aa)). The 67-residue stretch at 376 to 442 (QEKIGKVLPV…EYDLWGTIVE (67 aa)) folds into the TRAM domain.

This sequence belongs to the methylthiotransferase family. RimO subfamily. The cofactor is [4Fe-4S] cluster.

Its subcellular location is the cytoplasm. The catalysed reaction is L-aspartate(89)-[ribosomal protein uS12]-hydrogen + (sulfur carrier)-SH + AH2 + 2 S-adenosyl-L-methionine = 3-methylsulfanyl-L-aspartate(89)-[ribosomal protein uS12]-hydrogen + (sulfur carrier)-H + 5'-deoxyadenosine + L-methionine + A + S-adenosyl-L-homocysteine + 2 H(+). Catalyzes the methylthiolation of an aspartic acid residue of ribosomal protein uS12. The sequence is that of Ribosomal protein uS12 methylthiotransferase RimO from Proteus mirabilis (strain HI4320).